A 50-amino-acid polypeptide reads, in one-letter code: uncharacterized protein (50 aa).

This is an uncharacterized protein from Saccharomyces cerevisiae (strain ATCC 204508 / S288c) (Baker's yeast).